Here is a 636-residue protein sequence, read N- to C-terminus: Probable potassium transport system protein Kup (636 aa).

The next 12 helical transmembrane spans lie at V22–Y42, I64–I84, L115–P135, F150–L170, L182–I202, F220–T240, W261–L281, L293–I313, I351–F371, V383–L403, P408–A428, and I433–T453.

Belongs to the HAK/KUP transporter (TC 2.A.72) family.

The protein localises to the cell inner membrane. It carries out the reaction K(+)(in) + H(+)(in) = K(+)(out) + H(+)(out). Its function is as follows. Transport of potassium into the cell. Likely operates as a K(+):H(+) symporter. In Pseudomonas putida (strain ATCC 700007 / DSM 6899 / JCM 31910 / BCRC 17059 / LMG 24140 / F1), this protein is Probable potassium transport system protein Kup.